Reading from the N-terminus, the 220-residue chain is Exodeoxyribonuclease 10 (220 aa).

It depends on Mg(2+) as a cofactor.

In terms of biological role, capable of degrading both single-strand and double-strand DNA with 3' to 5' polarity. Has higher affinity for ssDNA ends than for dsDNA. The chain is Exodeoxyribonuclease 10 (exoX) from Escherichia coli O6:H1 (strain CFT073 / ATCC 700928 / UPEC).